A 61-amino-acid polypeptide reads, in one-letter code: Metallothionein-1 (61 aa).

Met1 carries the post-translational modification N-acetylmethionine. A beta region spans residues 1 to 29 (MDPNCSCSTGGSCTCTSSCACKNCKCTSC). The a divalent metal cation site is built by Cys5, Cys7, Cys13, Cys15, Cys19, Cys21, Cys24, Cys26, Cys29, Cys33, Cys34, Cys36, Cys37, Cys41, Cys44, Cys48, Cys50, Cys57, Cys59, and Cys60. Residues 30–61 (KKSCCSCCPVGCSKCAQGCVCKGAADKCTCCA) form an alpha region.

This sequence belongs to the metallothionein superfamily. Type 1 family.

Metallothioneins have a high content of cysteine residues that bind various heavy metals; these proteins are transcriptionally regulated by both heavy metals and glucocorticoids. In Mus musculus (Mouse), this protein is Metallothionein-1 (Mt1).